Reading from the N-terminus, the 173-residue chain is Putative metal-dependent hydrolase BT9727_2476 (173 aa).

Zn(2+) contacts are provided by H65, H156, and H160.

This sequence belongs to the metal hydrolase YfiT family. In terms of assembly, homodimer. Zn(2+) is required as a cofactor.

It is found in the cytoplasm. In terms of biological role, possible metal-dependent hydrolase. This chain is Putative metal-dependent hydrolase BT9727_2476, found in Bacillus thuringiensis subsp. konkukian (strain 97-27).